Reading from the N-terminus, the 705-residue chain is Polyribonucleotide nucleotidyltransferase (705 aa).

Mg(2+) contacts are provided by Asp494 and Asp500. Residues 561-620 form the KH domain; the sequence is PRITTVKVKPEKVRAVIGTGGKNIRQIVSETGVTIDVEDDGTVTIASSDMEASARAIAMV. The 69-residue stretch at 630-698 folds into the S1 motif domain; the sequence is GKIYRGTVKK…KQGKIRLSRK (69 aa).

This sequence belongs to the polyribonucleotide nucleotidyltransferase family. The cofactor is Mg(2+).

The protein resides in the cytoplasm. It carries out the reaction RNA(n+1) + phosphate = RNA(n) + a ribonucleoside 5'-diphosphate. Its function is as follows. Involved in mRNA degradation. Catalyzes the phosphorolysis of single-stranded polyribonucleotides processively in the 3'- to 5'-direction. This chain is Polyribonucleotide nucleotidyltransferase, found in Syntrophus aciditrophicus (strain SB).